Here is a 618-residue protein sequence, read N- to C-terminus: Keratin, type I cytoskeletal 9 (618 aa).

Residues methionine 1–serine 49 are disordered. Residues methionine 1–asparagine 137 are head. Residues serine 7–serine 16 are compositionally biased toward low complexity. A phosphoserine mark is found at serine 14 and serine 17. Over residues serine 17–alanine 26 the composition is skewed to gly residues. The span at serine 27–serine 49 shows a compositional bias: low complexity. The coil 1A stretch occupies residues glutamate 138–tryptophan 173. The IF rod domain occupies glutamate 138 to phenylalanine 450. The linker 1 stretch occupies residues tyrosine 174–threonine 192. Positions isoleucine 193 to leucine 284 are coil 1B. The segment at threonine 285–valine 307 is linker 12. The coil 2 stretch occupies residues leucine 308 to glycine 446. The tract at residues glutamine 447–serine 609 is tail. Residues aspartate 449–arginine 618 are disordered. Over residues glycine 456–asparagine 603 the composition is skewed to gly residues. Residues serine 607 to arginine 618 show a composition bias toward low complexity.

The protein belongs to the intermediate filament family. As to quaternary structure, heterotetramer of two type I and two type II keratins. Expressed in the perinuclear ring of spermatid manchettes within testis and in keratinocytes of the suprabasal layer of footpad epidermis (at protein level).

May serve an important special function either in the mature palmar and plantar skin tissue or in the morphogenetic program of the formation of these tissues. Plays a role in keratin filament assembly. May be involved in spermatid nuclear shaping and sperm development. This is Keratin, type I cytoskeletal 9 (Krt9) from Rattus norvegicus (Rat).